We begin with the raw amino-acid sequence, 601 residues long: Elongation factor 4 (601 aa).

In terms of domain architecture, tr-type G spans 5–187 (IRKKNFCIIA…AICKHVPSPR (183 aa)). Residues 17-22 (DHGKST) and 134-137 (NKID) each bind GTP.

This sequence belongs to the TRAFAC class translation factor GTPase superfamily. Classic translation factor GTPase family. LepA subfamily.

It localises to the cell inner membrane. It carries out the reaction GTP + H2O = GDP + phosphate + H(+). Required for accurate and efficient protein synthesis under certain stress conditions. May act as a fidelity factor of the translation reaction, by catalyzing a one-codon backward translocation of tRNAs on improperly translocated ribosomes. Back-translocation proceeds from a post-translocation (POST) complex to a pre-translocation (PRE) complex, thus giving elongation factor G a second chance to translocate the tRNAs correctly. Binds to ribosomes in a GTP-dependent manner. This is Elongation factor 4 from Borrelia garinii subsp. bavariensis (strain ATCC BAA-2496 / DSM 23469 / PBi) (Borreliella bavariensis).